We begin with the raw amino-acid sequence, 349 residues long: UDP-3-O-acylglucosamine N-acyltransferase (349 aa).

The Proton acceptor role is filled by H248.

This sequence belongs to the transferase hexapeptide repeat family. LpxD subfamily. As to quaternary structure, homotrimer.

It carries out the reaction a UDP-3-O-[(3R)-3-hydroxyacyl]-alpha-D-glucosamine + a (3R)-hydroxyacyl-[ACP] = a UDP-2-N,3-O-bis[(3R)-3-hydroxyacyl]-alpha-D-glucosamine + holo-[ACP] + H(+). It functions in the pathway bacterial outer membrane biogenesis; LPS lipid A biosynthesis. Its function is as follows. Catalyzes the N-acylation of UDP-3-O-acylglucosamine using 3-hydroxyacyl-ACP as the acyl donor. Is involved in the biosynthesis of lipid A, a phosphorylated glycolipid that anchors the lipopolysaccharide to the outer membrane of the cell. The sequence is that of UDP-3-O-acylglucosamine N-acyltransferase from Colwellia psychrerythraea (strain 34H / ATCC BAA-681) (Vibrio psychroerythus).